Consider the following 164-residue polypeptide: Serine/arginine-rich splicing factor 3 (164 aa).

M1 is modified (N-acetylmethionine). The sufficient for interaction with NXF1 and SRSP stretch occupies residues 1–90 (MHRDSCPLDC…SNGEKRSRNR (90 aa)). S5 is subject to Phosphoserine. One can recognise an RRM domain in the interval 10 to 83 (CKVYVGNLGN…CRVRVELSNG (74 aa)). K23 carries the post-translational modification N6-acetyllysine. The disordered stretch occupies residues 81–164 (SNGEKRSRNR…RSRSRSNERK (84 aa)). The span at 107–128 (RSPPPRRRSPRRRSFSRSRSRS) shows a compositional bias: basic residues. The B-1 repeat unit spans residues 119–133 (RSFSRSRSRSLSRDR). Residues 119 to 164 (RSFSRSRSRSLSRDRRRERSLSRERNHKPSRSFSRSRSRSRSNERK) are 2 X approximate repeats, basic. Basic and acidic residues predominate over residues 129–142 (LSRDRRRERSLSRE). Basic residues predominate over residues 143-158 (RNHKPSRSFSRSRSRS). Residues 149 to 164 (RSFSRSRSRSRSNERK) form a B-2 repeat.

It belongs to the splicing factor SR family. In terms of assembly, interacts with CPSF6. Interacts with RBMY1A1. Interacts with SREK1/SFRS12. Interacts with NXF1. Interacts with YTHDC1, leading to recruitment to RNA elements adjacent to m6A sites. Interacts with SRSP; increases SRSF3 binding to specific exons. Phosphorylated by CLK1, CLK2, CLK3 and CLK4. Extensively phosphorylated on serine residues in the RS domain.

It is found in the nucleus. It localises to the nucleus speckle. The protein localises to the cytoplasm. Functionally, splicing factor, which binds the consensus motif 5'-C[ACU][AU]C[ACU][AC]C-3' within pre-mRNA and promotes specific exons inclusion during alternative splicing. Interaction with YTHDC1, a RNA-binding protein that recognizes and binds N6-methyladenosine (m6A)-containing RNAs, promotes recruitment of SRSF3 to its mRNA-binding elements adjacent to m6A sites within exons. Also functions as an adapter involved in mRNA nuclear export. Binds mRNA which is thought to be transferred to the NXF1-NXT1 heterodimer for export (TAP/NXF1 pathway); enhances NXF1-NXT1 RNA-binding activity. Involved in nuclear export of m6A-containing mRNAs via interaction with YTHDC1: interaction with YTHDC1 facilitates m6A-containing mRNA-binding to both SRSF3 and NXF1, promoting mRNA nuclear export. The chain is Serine/arginine-rich splicing factor 3 (SRSF3) from Bos taurus (Bovine).